We begin with the raw amino-acid sequence, 101 residues long: MGIRYLLVLVLVLLVLGCEVQGAHMPQQDEATSPSLFTQMQESFYGYWGIAKSAAQGLYEKTYLTTVDEKIREIYNKSTAAVSTYAGIFTDQLLSMLKGDQ.

The signal sequence occupies residues 1–22 (MGIRYLLVLVLVLLVLGCEVQG). The lipid binding stretch occupies residues 66 to 74 (TVDEKIREI). Residues 78–101 (STAAVSTYAGIFTDQLLSMLKGDQ) are lipoprotein lipase cofactor.

It belongs to the apolipoprotein C2 family. Post-translationally, proapolipoprotein C-II is synthesized as a sialic acid containing glycoprotein which is subsequently desialylated prior to its proteolytic processing. In terms of processing, proapolipoprotein C-II, the major form found in plasma undergoes proteolytic cleavage of its N-terminal hexapeptide to generate apolipoprotein C-II, which occurs as the minor form in plasma.

The protein localises to the secreted. Its function is as follows. Component of chylomicrons, very low-density lipoproteins (VLDL), low-density lipoproteins (LDL), and high-density lipoproteins (HDL) in plasma. Plays an important role in lipoprotein metabolism as an activator of lipoprotein lipase. Both proapolipoprotein C-II and apolipoprotein C-II can activate lipoprotein lipase. The sequence is that of Apolipoprotein C-II (APOC2) from Mirounga angustirostris (Northern elephant seal).